The chain runs to 277 residues: NH(3)-dependent NAD(+) synthetase (277 aa).

Residue 36 to 43 coordinates ATP; the sequence is GLSGGIDS. Asp-42 provides a ligand contact to Mg(2+). Residue Arg-118 coordinates deamido-NAD(+). An ATP-binding site is contributed by Thr-138. Glu-143 contributes to the Mg(2+) binding site. Lys-167 and Ser-189 together coordinate ATP.

This sequence belongs to the NAD synthetase family. Homodimer.

It carries out the reaction deamido-NAD(+) + NH4(+) + ATP = AMP + diphosphate + NAD(+) + H(+). It participates in cofactor biosynthesis; NAD(+) biosynthesis; NAD(+) from deamido-NAD(+) (ammonia route): step 1/1. Catalyzes the ATP-dependent amidation of deamido-NAD to form NAD. Uses ammonia as a nitrogen source. The chain is NH(3)-dependent NAD(+) synthetase from Chlorobaculum parvum (strain DSM 263 / NCIMB 8327) (Chlorobium vibrioforme subsp. thiosulfatophilum).